A 299-amino-acid polypeptide reads, in one-letter code: Acetylglutamate kinase (299 aa).

Substrate is bound by residues 70–71, Arg92, and Asn186; that span reads GG.

This sequence belongs to the acetylglutamate kinase family. ArgB subfamily.

The protein localises to the cytoplasm. It catalyses the reaction N-acetyl-L-glutamate + ATP = N-acetyl-L-glutamyl 5-phosphate + ADP. The protein operates within amino-acid biosynthesis; L-arginine biosynthesis; N(2)-acetyl-L-ornithine from L-glutamate: step 2/4. In terms of biological role, catalyzes the ATP-dependent phosphorylation of N-acetyl-L-glutamate. This Thermoanaerobacter pseudethanolicus (strain ATCC 33223 / 39E) (Clostridium thermohydrosulfuricum) protein is Acetylglutamate kinase.